The primary structure comprises 428 residues: Enolase (428 aa).

Gln162 serves as a coordination point for (2R)-2-phosphoglycerate. Residue Glu204 is the Proton donor of the active site. Asp241, Glu282, and Asp309 together coordinate Mg(2+). 4 residues coordinate (2R)-2-phosphoglycerate: Lys334, Arg363, Ser364, and Lys385. Lys334 (proton acceptor) is an active-site residue.

The protein belongs to the enolase family. Mg(2+) serves as cofactor.

Its subcellular location is the cytoplasm. The protein localises to the secreted. It localises to the cell surface. It catalyses the reaction (2R)-2-phosphoglycerate = phosphoenolpyruvate + H2O. It participates in carbohydrate degradation; glycolysis; pyruvate from D-glyceraldehyde 3-phosphate: step 4/5. Functionally, catalyzes the reversible conversion of 2-phosphoglycerate (2-PG) into phosphoenolpyruvate (PEP). It is essential for the degradation of carbohydrates via glycolysis. The polypeptide is Enolase (Mycobacterium ulcerans (strain Agy99)).